Reading from the N-terminus, the 216-residue chain is Transmembrane emp24 domain-containing protein eca (216 aa).

A signal peptide spans 1–20; the sequence is MRDQFISLALILCVLHSACG. Topologically, residues 21 to 182 are lumenal; the sequence is LYFHISETER…FRHTSESTNS (162 aa). One can recognise a GOLD domain in the interval 30–126; it reads RKCFIEEVPD…QLRVHLDIQV (97 aa). A coiled-coil region spans residues 134–164; sequence ANVAQKEKLTELQLRIRQLLDQVEQITKEQN. The helical transmembrane segment at 183 to 203 threads the bilayer; that stretch reads RVLWWSLAQTVVLVCMGFWQM. Residues 204-216 are Cytoplasmic-facing; the sequence is RHLKSFFEAKKLV. The Prevents secretion from ER motif lies at 213-216; it reads KKLV.

The protein belongs to the EMP24/GP25L family.

The protein resides in the endoplasmic reticulum membrane. In terms of biological role, eca and bai are essential, though not redundant, for dorsoventral patterning of the embryo. Specifically required during early embryogenesis for the activity of maternal tkv, while the zygotic tkv is not affected. Involved in Golgi organization. The protein is Transmembrane emp24 domain-containing protein eca of Drosophila simulans (Fruit fly).